Here is a 461-residue protein sequence, read N- to C-terminus: CBL-interacting protein kinase 1 (461 aa).

In terms of domain architecture, Protein kinase spans Tyr19–Phe274. Residues Leu25–Val33 and Lys48 each bind ATP. Asp142 (proton acceptor) is an active-site residue. The segment at Asp160–Glu189 is activation loop. An NAF domain is found at Glu308–Glu332. Residues Gln338–Val367 form a PPI region.

The protein belongs to the protein kinase superfamily. CAMK Ser/Thr protein kinase family. SNF1 subfamily. The cofactor is Mn(2+).

The catalysed reaction is L-seryl-[protein] + ATP = O-phospho-L-seryl-[protein] + ADP + H(+). The enzyme catalyses L-threonyl-[protein] + ATP = O-phospho-L-threonyl-[protein] + ADP + H(+). CIPK serine-threonine protein kinases interact with CBL proteins. Binding of a CBL protein to the regulatory NAF domain of CIPK protein lead to the activation of the kinase in a calcium-dependent manner. In Oryza sativa subsp. japonica (Rice), this protein is CBL-interacting protein kinase 1 (CIPK1).